The primary structure comprises 166 residues: Lipoprotein signal peptidase (166 aa).

A run of 4 helical transmembrane segments spans residues Val-11–Val-31, Leu-42–Ser-62, Trp-67–Leu-87, and Leu-90–Gly-110. Catalysis depends on residues Asp-123 and Asp-141. Residues His-133–Phe-153 traverse the membrane as a helical segment.

This sequence belongs to the peptidase A8 family.

Its subcellular location is the cell inner membrane. It carries out the reaction Release of signal peptides from bacterial membrane prolipoproteins. Hydrolyzes -Xaa-Yaa-Zaa-|-(S,diacylglyceryl)Cys-, in which Xaa is hydrophobic (preferably Leu), and Yaa (Ala or Ser) and Zaa (Gly or Ala) have small, neutral side chains.. Its pathway is protein modification; lipoprotein biosynthesis (signal peptide cleavage). Functionally, this protein specifically catalyzes the removal of signal peptides from prolipoproteins. This Pseudoalteromonas translucida (strain TAC 125) protein is Lipoprotein signal peptidase.